The following is a 211-amino-acid chain: Wound-induced protein WIN2 (211 aa).

Residues 1–25 form the signal peptide; it reads MVKLSCGPILLALVLCISLTSVANA. A Chitin-binding type-1 domain is found at 26-68; it reads QQCGRQRGGALCGNNLCCSQFGWCGSTPEYCSPSQGCQSQCTG. 4 disulfide bridges follow: C28/C43, C37/C49, C42/C56, and C62/C66. Positions 77–198 constitute a Barwin domain; that stretch reads GSAQNVRATY…VNYQFVNCGD (122 aa).

In Solanum tuberosum (Potato), this protein is Wound-induced protein WIN2 (WIN2).